A 364-amino-acid chain; its full sequence is Dihydroorotate dehydrogenase (quinone) (364 aa).

Residues 61 to 65 (AGFDK) and T85 contribute to the FMN site. Position 65 (K65) interacts with substrate. 110 to 114 (NRMGF) lines the substrate pocket. FMN contacts are provided by N139 and N170. Residue N170 participates in substrate binding. Catalysis depends on S173, which acts as the Nucleophile. N175 contacts substrate. 2 residues coordinate FMN: K214 and A242. Residue 243-244 (NT) participates in substrate binding. FMN is bound by residues G266, G295, and 316-317 (YS).

The protein belongs to the dihydroorotate dehydrogenase family. Type 2 subfamily. As to quaternary structure, monomer. FMN serves as cofactor.

It localises to the cell membrane. It catalyses the reaction (S)-dihydroorotate + a quinone = orotate + a quinol. It participates in pyrimidine metabolism; UMP biosynthesis via de novo pathway; orotate from (S)-dihydroorotate (quinone route): step 1/1. Catalyzes the conversion of dihydroorotate to orotate with quinone as electron acceptor. The chain is Dihydroorotate dehydrogenase (quinone) from Rhodopseudomonas palustris (strain BisA53).